The following is a 694-amino-acid chain: Long-chain-fatty-acid--CoA ligase 3 (694 aa).

A disordered region spans residues 1-25 (MSEQHSVAVGKAANEHETAPRRNVR). At serine 2 the chain carries N-acetylserine. 269–280 (YTSGSISAPKGV) contributes to the ATP binding site. The short motif at 527-576 (DGWFRTGDIVEWTPKGQLKIIDRRKNLVKTLNGEYIALEKLESVYRSNSY) is the FACS element.

This sequence belongs to the ATP-dependent AMP-binding enzyme family. In terms of assembly, interacts with FRK1. Requires Mg(2+) as cofactor.

The protein resides in the cell membrane. It carries out the reaction a long-chain fatty acid + ATP + CoA = a long-chain fatty acyl-CoA + AMP + diphosphate. It catalyses the reaction (9Z)-octadecenoate + ATP + CoA = (9Z)-octadecenoyl-CoA + AMP + diphosphate. The catalysed reaction is hexadecanoate + ATP + CoA = hexadecanoyl-CoA + AMP + diphosphate. The enzyme catalyses (9Z)-hexadecenoate + ATP + CoA = (9Z)-hexadecenoyl-CoA + AMP + diphosphate. It carries out the reaction (9Z)-tetradecenoate + ATP + CoA = (9Z)-tetradecenoyl-CoA + AMP + diphosphate. It catalyses the reaction (9Z,12Z)-octadecadienoate + ATP + CoA = (9Z,12Z)-octadecadienoyl-CoA + AMP + diphosphate. In terms of biological role, activates endogenous long-chain fatty acids (LCFA) by esterification of the fatty acids into metabolically active CoA-thioesters for subsequent degradation or incorporation into phospholipids. Acts preferentially on C16 and C18 fatty acids with a cis-double bond at C-9-C-10. The protein is Long-chain-fatty-acid--CoA ligase 3 (FAA3) of Saccharomyces cerevisiae (strain ATCC 204508 / S288c) (Baker's yeast).